The primary structure comprises 99 residues: UPF0235 protein AHA_3661 (99 aa).

Belongs to the UPF0235 family.

This Aeromonas hydrophila subsp. hydrophila (strain ATCC 7966 / DSM 30187 / BCRC 13018 / CCUG 14551 / JCM 1027 / KCTC 2358 / NCIMB 9240 / NCTC 8049) protein is UPF0235 protein AHA_3661.